The chain runs to 165 residues: U11/U12 small nuclear ribonucleoprotein 25 kDa protein (165 aa).

One can recognise a Ubiquitin-like domain in the interval 52-137 (MRLSVVKLDG…IRNNSQVTFM (86 aa)). The segment at 145–165 (RGRHSKRKKHRLFRSLHKTSS) is disordered.

As to quaternary structure, component of the U11/U12 snRNPs that are part of the U12-type spliceosome.

The protein resides in the nucleus. The chain is U11/U12 small nuclear ribonucleoprotein 25 kDa protein (SNRNP25) from Arabidopsis thaliana (Mouse-ear cress).